A 227-amino-acid polypeptide reads, in one-letter code: Urease accessory protein UreF (227 aa).

Belongs to the UreF family. As to quaternary structure, ureD, UreF and UreG form a complex that acts as a GTP-hydrolysis-dependent molecular chaperone, activating the urease apoprotein by helping to assemble the nickel containing metallocenter of UreC. The UreE protein probably delivers the nickel.

It localises to the cytoplasm. Its function is as follows. Required for maturation of urease via the functional incorporation of the urease nickel metallocenter. The protein is Urease accessory protein UreF of Bacillus sp. (strain TB-90).